The sequence spans 482 residues: Zinc metalloproteinase/disintegrin (482 aa).

The signal sequence occupies residues 1–20; it reads MIQVLLVTICLAAFPYQGSS. A propeptide spanning residues 21 to 189 is cleaved from the precursor; it reads MILESGNVND…IKASQLVVTA (169 aa). A Peptidase M12B domain is found at 197-393; that stretch reads RYIELVVVAD…HNPQCILNEP (197 aa). Residues E200 and D284 each coordinate Ca(2+). 2 disulfides stabilise this stretch: C308/C388 and C348/C372. Residue H333 participates in Zn(2+) binding. E334 is a catalytic residue. Zn(2+) is bound by residues H337 and H343. The Ca(2+) site is built by C388 and N391. Residues 394–409 constitute a propeptide that is removed on maturation; the sequence is LRTDTVSTPVSGNELL. The Disintegrin domain occupies 401–482; that stretch reads TPVSGNELLE…AGCPRNPFHA (82 aa). 6 disulfides stabilise this stretch: C415/C430, C417/C425, C424/C447, C438/C444, C443/C468, and C456/C475. Positions 460 to 462 match the Cell attachment site motif; it reads RGD.

The protein belongs to the venom metalloproteinase (M12B) family. P-II subfamily. P-IId sub-subfamily. Homodimer; disulfide-linked (disintegrin). It depends on Zn(2+) as a cofactor. Expressed by the venom gland.

It is found in the secreted. In terms of biological role, this recombinant protein hydrolyzes fibronectin, but has no effect on type I gelatin and type I to V collagens. Selectively hydrolyzes the Aalpha-chain of fibrinogen (FGA), but has no effect on fibrin. Inhibits ADP-induced platelet aggregation. Functionally, recombinant metalloproteinase-disintegrin Mt-d-I (393-408): hydrolyzes type I gelatin, type III and V collagens, but has no effect on type I, II, IV collagens and fibronectin. Selectively hydrolyzes the Aalpha-chain of fibrinogen, but has no effect on fibrin. May induce hemorrhage in vascular tissue. Strongly inhibits ADP-induced platelet aggregation. When concentrated, Mt-d-I undergoes autoproteolytic processing into metalloproteinase and disintegrin. The chain is Zinc metalloproteinase/disintegrin from Gloydius brevicauda (Korean slamosa snake).